Here is an 837-residue protein sequence, read N- to C-terminus: Tuftelin-interacting protein 11 (837 aa).

Composition is skewed to basic and acidic residues over residues 1-13 and 53-64; these read MSLS…GEGR and VWAERDSDDERP. 3 disordered regions span residues 1 to 21, 53 to 72, and 85 to 133; these read MSLS…DDER, VWAE…KRAR, and LKKG…KGFA. Positions 1–50 are required for interaction with DHX15; sequence MSLSHLYRDGEGRIDDDDDERENFEITDWDLQNEFNPNRQRHWQTKEEAT. Ser-2, Ser-59, and Ser-98 each carry phosphoserine. A compositionally biased stretch (acidic residues) spans 91-102; that stretch reads EEAELEDSDDEE. Positions 103–116 are enriched in basic and acidic residues; sequence KPVKQDDFPKDFGP. Ser-144 carries the post-translational modification Phosphoserine. The G-patch domain maps to 149-195; that stretch reads TKGIGQKLLQKMGYVPGRGLGKNAQGIINPIEAKQRKGKGAVGAYGS. Residues 179 to 236 are disordered; it reads IEAKQRKGKGAVGAYGSERTTQSMQDFPVVDSEEEAEEEFQKELSQWRKDPSGSKKKP. Ser-210 is subject to Phosphoserine. Over residues 217–231 the composition is skewed to basic and acidic residues; the sequence is EFQKELSQWRKDPSG. Positions 700-705 match the Nuclear localization signal motif; sequence VKDKFN. The required for nuclear speckle localization stretch occupies residues 710–734; it reads IMNRAVSSNVGAYMQPGARENIAYL.

This sequence belongs to the TFP11/STIP family. As to quaternary structure, identified in the spliceosome C complex. Found in the Intron Large (IL) complex, a post-mRNA release spliceosomal complex containing the excised intron, U2, U5 and U6 snRNPs, and splicing factors. Interacts with TUFT1. Interacts with DHX15; indicative for a recruitment of DHX15 to the IL complex. Interacts with GCFC2.

Its subcellular location is the cytoplasm. The protein localises to the nucleus. Involved in pre-mRNA splicing, specifically in spliceosome disassembly during late-stage splicing events. Intron turnover seems to proceed through reactions in two lariat-intron associated complexes termed Intron Large (IL) and Intron Small (IS). In cooperation with DHX15 seems to mediate the transition of the U2, U5 and U6 snRNP-containing IL complex to the snRNP-free IS complex leading to efficient debranching and turnover of excised introns. May play a role in the differentiation of ameloblasts and odontoblasts or in the forming of the enamel extracellular matrix. This Pan troglodytes (Chimpanzee) protein is Tuftelin-interacting protein 11 (TFIP11).